Reading from the N-terminus, the 167-residue chain is Lipoprotein signal peptidase (167 aa).

4 helical membrane-spanning segments follow: residues 8-28, 46-66, 68-88, and 101-121; these read TFLT…VVLL, WGHF…FGLF, QYKI…ALFL, and VALT…LLYG. Residues Asp125 and Asp143 contribute to the active site. A helical transmembrane segment spans residues 139 to 159; it reads FNLADAFISIGTLLLIGHLYF.

This sequence belongs to the peptidase A8 family.

The protein resides in the cell inner membrane. It catalyses the reaction Release of signal peptides from bacterial membrane prolipoproteins. Hydrolyzes -Xaa-Yaa-Zaa-|-(S,diacylglyceryl)Cys-, in which Xaa is hydrophobic (preferably Leu), and Yaa (Ala or Ser) and Zaa (Gly or Ala) have small, neutral side chains.. Its pathway is protein modification; lipoprotein biosynthesis (signal peptide cleavage). In terms of biological role, this protein specifically catalyzes the removal of signal peptides from prolipoproteins. The chain is Lipoprotein signal peptidase from Chlamydia trachomatis serovar A (strain ATCC VR-571B / DSM 19440 / HAR-13).